A 567-amino-acid polypeptide reads, in one-letter code: Periplasmic [NiFe] hydrogenase large subunit (567 aa).

Glu-62 lines the Mg(2+) pocket. Positions 81 and 84 each coordinate Ni(2+). Residue Cys-84 participates in Fe cation binding. Leu-498 is a binding site for Mg(2+). The Ni(2+) site is built by Cys-546 and Cys-549. Cys-549 lines the Fe cation pocket. Residue His-552 coordinates Mg(2+). Positions 553–567 are excised as a propeptide; that stretch reads VIDGHTNEVHKFRIL.

The protein belongs to the [NiFe]/[NiFeSe] hydrogenase large subunit family. Heterodimer of a large and a small subunit. It depends on Ni(2+) as a cofactor. Fe cation serves as cofactor.

It is found in the periplasm. It catalyses the reaction 2 Fe(III)-[cytochrome c3] + H2 = 2 Fe(II)-[cytochrome c3] + 2 H(+). Catalyzes the reversible oxidoreduction of molecular hydrogen, in conjunction with a specific electron acceptor, cytochrome c3. This is Periplasmic [NiFe] hydrogenase large subunit (hydB) from Nitratidesulfovibrio vulgaris (strain DSM 19637 / Miyazaki F) (Desulfovibrio vulgaris).